Here is a 142-residue protein sequence, read N- to C-terminus: Probable inactive dual specificity protein phosphatase-like At4g18593 (142 aa).

The protein belongs to the protein-tyrosine phosphatase family. Non-receptor class dual specificity subfamily.

The sequence is that of Probable inactive dual specificity protein phosphatase-like At4g18593 from Arabidopsis thaliana (Mouse-ear cress).